The primary structure comprises 51 residues: Large ribosomal subunit protein eL39 (51 aa).

Positions 1-23 are disordered; the sequence is MSALKKSFIKRKLAKKQKQNRPM. Basic residues predominate over residues 7-19; it reads SFIKRKLAKKQKQ.

Belongs to the eukaryotic ribosomal protein eL39 family. As to quaternary structure, interacts with impact.

This chain is Large ribosomal subunit protein eL39 (rpl-39), found in Caenorhabditis elegans.